The sequence spans 212 residues: Pyridoxine/pyridoxamine 5'-phosphate oxidase (212 aa).

Substrate is bound by residues 8–11 (RTNY) and Lys66. Residues 61–66 (RIVLLK), 76–77 (FT), Lys83, and Gln105 contribute to the FMN site. Substrate is bound by residues Tyr123, Arg127, and Ser131. FMN-binding positions include 140-141 (QS) and Trp185. Residue 191–193 (RLH) coordinates substrate. Arg195 lines the FMN pocket.

This sequence belongs to the pyridoxamine 5'-phosphate oxidase family. In terms of assembly, homodimer. FMN is required as a cofactor.

The catalysed reaction is pyridoxamine 5'-phosphate + O2 + H2O = pyridoxal 5'-phosphate + H2O2 + NH4(+). The enzyme catalyses pyridoxine 5'-phosphate + O2 = pyridoxal 5'-phosphate + H2O2. It participates in cofactor metabolism; pyridoxal 5'-phosphate salvage; pyridoxal 5'-phosphate from pyridoxamine 5'-phosphate: step 1/1. Its pathway is cofactor metabolism; pyridoxal 5'-phosphate salvage; pyridoxal 5'-phosphate from pyridoxine 5'-phosphate: step 1/1. Functionally, catalyzes the oxidation of either pyridoxine 5'-phosphate (PNP) or pyridoxamine 5'-phosphate (PMP) into pyridoxal 5'-phosphate (PLP). This is Pyridoxine/pyridoxamine 5'-phosphate oxidase from Leptospira biflexa serovar Patoc (strain Patoc 1 / Ames).